The sequence spans 744 residues: FHF complex subunit HOOK-interacting protein 2B (744 aa).

Disordered stretches follow at residues K184 to D213 and L510 to G530. Basic and acidic residues predominate over residues A197–D213.

It belongs to the FHIP family. In terms of tissue distribution, expressed in colon.

Its function is as follows. Able to activate MAPK/ERK and TGFB signaling pathways. May regulate the activity of genes involved in intestinal barrier function and immunoprotective inflammation. May play a role in cell proliferation. The chain is FHF complex subunit HOOK-interacting protein 2B from Mus musculus (Mouse).